Reading from the N-terminus, the 360-residue chain is Phosphoserine aminotransferase (360 aa).

Arginine 41 contributes to the L-glutamate binding site. Pyridoxal 5'-phosphate contacts are provided by tryptophan 101, threonine 152, aspartate 172, and glutamine 195. At lysine 196 the chain carries N6-(pyridoxal phosphate)lysine. A pyridoxal 5'-phosphate-binding site is contributed by 237–238 (NT).

The protein belongs to the class-V pyridoxal-phosphate-dependent aminotransferase family. SerC subfamily. In terms of assembly, homodimer. Pyridoxal 5'-phosphate serves as cofactor.

It localises to the cytoplasm. It carries out the reaction O-phospho-L-serine + 2-oxoglutarate = 3-phosphooxypyruvate + L-glutamate. The catalysed reaction is 4-(phosphooxy)-L-threonine + 2-oxoglutarate = (R)-3-hydroxy-2-oxo-4-phosphooxybutanoate + L-glutamate. It participates in amino-acid biosynthesis; L-serine biosynthesis; L-serine from 3-phospho-D-glycerate: step 2/3. It functions in the pathway cofactor biosynthesis; pyridoxine 5'-phosphate biosynthesis; pyridoxine 5'-phosphate from D-erythrose 4-phosphate: step 3/5. Functionally, catalyzes the reversible conversion of 3-phosphohydroxypyruvate to phosphoserine and of 3-hydroxy-2-oxo-4-phosphonooxybutanoate to phosphohydroxythreonine. In Paraburkholderia phytofirmans (strain DSM 17436 / LMG 22146 / PsJN) (Burkholderia phytofirmans), this protein is Phosphoserine aminotransferase.